A 216-amino-acid polypeptide reads, in one-letter code: Adenylate kinase (216 aa).

10-15 serves as a coordination point for ATP; the sequence is GAGKGT. An NMP region spans residues 30 to 59; sequence STGDMLRAAVAAGTEVGKRAKAVMDAGKLV. Residues Thr31, Arg36, 57 to 59, 85 to 88, and Gln92 each bind AMP; these read KLV and GFPR. An LID region spans residues 126–163; the sequence is GRYTCANCGAGYHDENLRPKVEGVCDRCGSTHFKRRAD. Arg127 serves as a coordination point for ATP. Residues Cys130, Cys133, Cys150, and Cys153 each contribute to the Zn(2+) site. AMP is bound by residues Arg160 and Arg172. Ala200 serves as a coordination point for ATP.

Belongs to the adenylate kinase family. In terms of assembly, monomer.

It is found in the cytoplasm. It catalyses the reaction AMP + ATP = 2 ADP. Its pathway is purine metabolism; AMP biosynthesis via salvage pathway; AMP from ADP: step 1/1. Catalyzes the reversible transfer of the terminal phosphate group between ATP and AMP. Plays an important role in cellular energy homeostasis and in adenine nucleotide metabolism. The chain is Adenylate kinase from Rhizobium rhizogenes (strain K84 / ATCC BAA-868) (Agrobacterium radiobacter).